Reading from the N-terminus, the 29-residue chain is Serum amyloid P-component (29 aa).

The Pentraxin (PTX) domain occupies 6-29 (LGKVFVFSKESNVDDVKLLTPQTE).

It belongs to the pentraxin family. As to quaternary structure, homopentamer. Pentraxin (or pentaxin) have a discoid arrangement of 5 non-covalently bound subunits. It depends on Ca(2+) as a cofactor.

The protein localises to the secreted. This Hippoglossus hippoglossus (Atlantic halibut) protein is Serum amyloid P-component.